We begin with the raw amino-acid sequence, 542 residues long: Putative beta-glucosidase 23 (542 aa).

An N-terminal signal peptide occupies residues 1–29; sequence MAACTSSLVSLLLLLLLLLLLLVAGEATA. A glycan (N-linked (GlcNAc...) asparagine) is linked at Asn34. Gln88 contributes to the a beta-D-glucoside binding site. N-linked (GlcNAc...) asparagine glycosylation is present at Asn135. His216 is an a beta-D-glucoside binding site. Residue Glu262 is the Proton donor of the active site. An intrachain disulfide couples Cys281 to Cys289. Residue Tyr405 participates in a beta-D-glucoside binding. A glycan (N-linked (GlcNAc...) asparagine) is linked at Asn445. Trp476 and Phe492 together coordinate a beta-D-glucoside.

This sequence belongs to the glycosyl hydrolase 1 family.

It carries out the reaction Hydrolysis of terminal, non-reducing beta-D-glucosyl residues with release of beta-D-glucose.. In Oryza sativa subsp. japonica (Rice), this protein is Putative beta-glucosidase 23 (BGLU23).